The chain runs to 387 residues: Putative ankyrin repeat protein RBE_0984 (387 aa).

ANK repeat units follow at residues 50 to 79 (YGNTPLSLALNKKLEAVCEVLVSRMSDKDI), 88 to 119 (HRETYFTLAAIKGFKGVCENLAPRMSNEAINV), 123 to 154 (RKHTALTLAADKNLPQVCIKLIPIMFDEVINV), 159 to 188 (HKDSALRKAIWNDLDVVCQMLIPVTSKENI), and 210 to 239 (VCKMLISRMIEDNSLDIINHVISKGELKGE). Coiled coils occupy residues 251–278 (FEDICELLQKSHEEYKEQKQKENEKKCE) and 311–352 (SISA…ALEK).

This chain is Putative ankyrin repeat protein RBE_0984, found in Rickettsia bellii (strain RML369-C).